The sequence spans 71 residues: Small ribosomal subunit protein bS18 (71 aa).

It belongs to the bacterial ribosomal protein bS18 family. In terms of assembly, part of the 30S ribosomal subunit. Forms a tight heterodimer with protein bS6.

Its function is as follows. Binds as a heterodimer with protein bS6 to the central domain of the 16S rRNA, where it helps stabilize the platform of the 30S subunit. This is Small ribosomal subunit protein bS18 from Thermosynechococcus vestitus (strain NIES-2133 / IAM M-273 / BP-1).